Here is a 101-residue protein sequence, read N- to C-terminus: uncharacterized protein (101 aa).

The chain crosses the membrane as a helical span at residues 58 to 80; sequence VFPSLNIIILMSDALMFFLRSSI.

The protein localises to the membrane. This is an uncharacterized protein from Saccharomyces cerevisiae (strain ATCC 204508 / S288c) (Baker's yeast).